The sequence spans 263 residues: Protein phosphatase type 2A regulatory subunit RTS3 (263 aa).

Disordered stretches follow at residues 1-62 (MIAT…AQRR) and 149-176 (LPLT…ISNG). Residues 46–61 (LSTSSSPSSSPMSAQR) are compositionally biased toward low complexity. 4 positions are modified to phosphoserine: serine 172, serine 192, serine 214, and serine 238.

Its subcellular location is the cytoplasm. The protein resides in the nucleus. In terms of biological role, may be a component of a protein phosphatase type 2A (PP2A) complex. Negatively regulates SIT4 phosphatase, a modulators of caffeine sensitivity. The sequence is that of Protein phosphatase type 2A regulatory subunit RTS3 (RTS3) from Saccharomyces cerevisiae (strain ATCC 204508 / S288c) (Baker's yeast).